The following is a 222-amino-acid chain: Small ribosomal subunit protein uS3 (222 aa).

Positions 38–106 constitute a KH type-2 domain; that stretch reads IRKFISEKLA…NVHINIVEIK (69 aa).

Belongs to the universal ribosomal protein uS3 family. Part of the 30S ribosomal subunit. Forms a tight complex with proteins S10 and S14.

Its function is as follows. Binds the lower part of the 30S subunit head. Binds mRNA in the 70S ribosome, positioning it for translation. This Lactobacillus gasseri (strain ATCC 33323 / DSM 20243 / BCRC 14619 / CIP 102991 / JCM 1131 / KCTC 3163 / NCIMB 11718 / NCTC 13722 / AM63) protein is Small ribosomal subunit protein uS3.